A 201-amino-acid polypeptide reads, in one-letter code: Casparian strip membrane protein 2 (201 aa).

Topologically, residues 1 to 38 (MKSTGEATAINIGETKSASATTVATTKAIQHPKAGLKR) are cytoplasmic. Residues 39–59 (GLAIFDFILRLSAIGAALAAT) form a helical membrane-spanning segment. Residues 60–89 (TTMGTTDQTLPFFTQFFQFQASYDDLPAFS) lie on the Extracellular side of the membrane. Residues 90–110 (FFVIANAIASGYLFLSLPFSI) traverse the membrane as a helical segment. Topologically, residues 111–129 (VCIVRPHAMGARLLLVICD) are cytoplasmic. The chain crosses the membrane as a helical span at residues 130–150 (TVMVALTIAAAAAAAAIVYLA). At 151-175 (HNGNSNANWVAICQQFDDFCQSVSG) the chain is on the extracellular side. A helical transmembrane segment spans residues 176–196 (AVVASFIAAVLFMLMIVLSAF). The Cytoplasmic portion of the chain corresponds to 197 to 201 (SLRKH).

Belongs to the Casparian strip membrane proteins (CASP) family. Homodimer and heterodimers.

It localises to the cell membrane. Functionally, regulates membrane-cell wall junctions and localized cell wall deposition. Required for establishment of the Casparian strip membrane domain (CSD) and the subsequent formation of Casparian strips, a cell wall modification of the root endodermis that determines an apoplastic barrier between the intraorganismal apoplasm and the extraorganismal apoplasm and prevents lateral diffusion. This is Casparian strip membrane protein 2 from Vitis vinifera (Grape).